The chain runs to 75 residues: MARYFRRRKFCRFTAEGVSEIDYKDVVTLKNYITESGKIVPSRITGTCAKYQRQLARAIKRARYLSLLPYTDLHK.

Belongs to the bacterial ribosomal protein bS18 family. As to quaternary structure, part of the 30S ribosomal subunit. Forms a tight heterodimer with protein bS6.

In terms of biological role, binds as a heterodimer with protein bS6 to the central domain of the 16S rRNA, where it helps stabilize the platform of the 30S subunit. In Psychromonas ingrahamii (strain DSM 17664 / CCUG 51855 / 37), this protein is Small ribosomal subunit protein bS18.